A 108-amino-acid polypeptide reads, in one-letter code: ADM5 (108 aa).

The first 18 residues, 1 to 18, serve as a signal peptide directing secretion; the sequence is MTAHILLLWLFASSILGD. Positions 19 to 25 are excised as a propeptide; it reads PDSAGRL. Cys38 and Cys43 are oxidised to a cystine. The interval 61-108 is disordered; that stretch reads KELSGKAGRKPQDPYSYGRRRRRRRRRREARLLRRLQDPSLRRAQLAG. Tyr77 bears the Tyrosine amide mark. Residues 78–89 are compositionally biased toward basic residues; sequence GRRRRRRRRRRE. Residues 89–108 constitute a propeptide that is removed on maturation; it reads EARLLRRLQDPSLRRAQLAG. Over residues 90-101 the composition is skewed to basic and acidic residues; the sequence is ARLLRRLQDPSL.

The protein belongs to the adrenomedullin family. Expressed abundantly in the spleen and thymus. Also expressed in adrenal and pituitary. Not expressed in brain, heart, kidney, liver and stomach.

The protein resides in the secreted. Functionally, seems to have a peripheral vasodepressor effect and a central vasopressor effect. This is ADM5 (ADM5) from Sus scrofa (Pig).